The primary structure comprises 183 residues: Adenine phosphoribosyltransferase (183 aa).

Belongs to the purine/pyrimidine phosphoribosyltransferase family. Homodimer.

The protein resides in the cytoplasm. The catalysed reaction is AMP + diphosphate = 5-phospho-alpha-D-ribose 1-diphosphate + adenine. The protein operates within purine metabolism; AMP biosynthesis via salvage pathway; AMP from adenine: step 1/1. Functionally, catalyzes a salvage reaction resulting in the formation of AMP, that is energically less costly than de novo synthesis. This chain is Adenine phosphoribosyltransferase, found in Shewanella halifaxensis (strain HAW-EB4).